Here is a 466-residue protein sequence, read N- to C-terminus: Ribulose bisphosphate carboxylase large chain (466 aa).

Lys5 carries the post-translational modification N6,N6,N6-trimethyllysine. 2 residues coordinate substrate: Asn114 and Thr164. The active-site Proton acceptor is Lys166. Lys168 provides a ligand contact to substrate. Positions 192, 194, and 195 each coordinate Mg(2+). Lys192 carries the post-translational modification N6-carboxylysine. The Proton acceptor role is filled by His285. The substrate site is built by Arg286, His318, and Ser370.

Belongs to the RuBisCO large chain family. Type I subfamily. In terms of assembly, heterohexadecamer of 8 large chains and 8 small chains; disulfide-linked. The disulfide link is formed within the large subunit homodimers. Mg(2+) is required as a cofactor. In terms of processing, the disulfide bond which can form in the large chain dimeric partners within the hexadecamer appears to be associated with oxidative stress and protein turnover.

The protein localises to the plastid. It is found in the chloroplast. It catalyses the reaction 2 (2R)-3-phosphoglycerate + 2 H(+) = D-ribulose 1,5-bisphosphate + CO2 + H2O. The catalysed reaction is D-ribulose 1,5-bisphosphate + O2 = 2-phosphoglycolate + (2R)-3-phosphoglycerate + 2 H(+). Its function is as follows. RuBisCO catalyzes two reactions: the carboxylation of D-ribulose 1,5-bisphosphate, the primary event in carbon dioxide fixation, as well as the oxidative fragmentation of the pentose substrate in the photorespiration process. Both reactions occur simultaneously and in competition at the same active site. The chain is Ribulose bisphosphate carboxylase large chain from Thespesia populnea (Portia tree).